The chain runs to 131 residues: Holo-[acyl-carrier-protein] synthase (131 aa).

Mg(2+) contacts are provided by Asp9 and Glu58.

This sequence belongs to the P-Pant transferase superfamily. AcpS family. Mg(2+) serves as cofactor.

Its subcellular location is the cytoplasm. The enzyme catalyses apo-[ACP] + CoA = holo-[ACP] + adenosine 3',5'-bisphosphate + H(+). In terms of biological role, transfers the 4'-phosphopantetheine moiety from coenzyme A to a Ser of acyl-carrier-protein. The sequence is that of Holo-[acyl-carrier-protein] synthase from Salmonella arizonae (strain ATCC BAA-731 / CDC346-86 / RSK2980).